The following is a 306-amino-acid chain: Pantothenate kinase (306 aa).

Residue 91–98 (GSVAVGKS) coordinates ATP.

It belongs to the prokaryotic pantothenate kinase family.

It localises to the cytoplasm. It catalyses the reaction (R)-pantothenate + ATP = (R)-4'-phosphopantothenate + ADP + H(+). Its pathway is cofactor biosynthesis; coenzyme A biosynthesis; CoA from (R)-pantothenate: step 1/5. This Streptococcus suis (strain 05ZYH33) protein is Pantothenate kinase.